The sequence spans 114 residues: Large ribosomal subunit protein bL20 (114 aa).

Belongs to the bacterial ribosomal protein bL20 family.

In terms of biological role, binds directly to 23S ribosomal RNA and is necessary for the in vitro assembly process of the 50S ribosomal subunit. It is not involved in the protein synthesizing functions of that subunit. The polypeptide is Large ribosomal subunit protein bL20 (Flavobacterium johnsoniae (strain ATCC 17061 / DSM 2064 / JCM 8514 / BCRC 14874 / CCUG 350202 / NBRC 14942 / NCIMB 11054 / UW101) (Cytophaga johnsonae)).